The sequence spans 45 residues: DVSFRLSGATSKKKVYFISNLRKALPNEKKLYDIPLVRSSXSGSK.

The protein belongs to the ribosome-inactivating protein family. Type 1 RIP subfamily.

It catalyses the reaction Endohydrolysis of the N-glycosidic bond at one specific adenosine on the 28S rRNA.. Capable of inhibiting HIV-1 infection and replication. It inactivates eukaryotic 60S ribosomal subunits. The polypeptide is Ribosome-inactivating protein TAP-29 (Trichosanthes kirilowii (Chinese snake gourd)).